The chain runs to 378 residues: Beta sliding clamp (378 aa).

It belongs to the beta sliding clamp family. Forms a ring-shaped head-to-tail homodimer around DNA which binds and tethers DNA polymerases and other proteins to the DNA. The DNA replisome complex has a single clamp-loading complex (3 tau and 1 each of delta, delta', psi and chi subunits) which binds 3 Pol III cores (1 core on the leading strand and 2 on the lagging strand) each with a beta sliding clamp dimer. Additional proteins in the replisome are other copies of gamma, psi and chi, Ssb, DNA helicase and RNA primase. Interacts with YabA, and via YabA, with DnaA. During sporulation probably interacts with SirA.

The protein localises to the cytoplasm. It localises to the nucleoid. Confers DNA tethering and processivity to DNA polymerases and other proteins. Acts as a clamp, forming a ring around DNA (a reaction catalyzed by the clamp-loading complex) which diffuses in an ATP-independent manner freely and bidirectionally along dsDNA. Initially characterized for its ability to contact the catalytic subunit of DNA polymerase III (Pol III), a complex, multichain enzyme responsible for most of the replicative synthesis in bacteria; Pol III exhibits 3'-5' exonuclease proofreading activity. The beta chain is required for initiation of replication as well as for processivity of DNA replication. Overexpression in vivo stimulates inititation of DNA replication from oriC. Increased levels of DnaN remove YabA from its association with DnaA on the chromosome, allowing DnaA to bind to its targets. Its interaction with DnaA probably serves as a sink to prevent excessive replication initiation. This is Beta sliding clamp from Bacillus subtilis (strain 168).